Here is a 325-residue protein sequence, read N- to C-terminus: uncharacterized protein (325 aa).

The chain crosses the membrane as a helical span at residues 10–30 (IVFVSLAALVLLVSVSVFIYH). One can recognise an AB hydrolase-1 domain in the interval 94 to 166 (KIAVVDRAGY…EIKAIIAMDI (73 aa)).

The protein localises to the cell membrane. This is an uncharacterized protein from Bacillus subtilis (strain 168).